Reading from the N-terminus, the 331-residue chain is Glucokinase (331 aa).

16–21 (GDIGGT) contributes to the ATP binding site.

It belongs to the bacterial glucokinase family.

It localises to the cytoplasm. It carries out the reaction D-glucose + ATP = D-glucose 6-phosphate + ADP + H(+). The chain is Glucokinase from Pseudomonas aeruginosa (strain UCBPP-PA14).